The following is a 255-amino-acid chain: D-aminoacyl-tRNA deacylase (255 aa).

The protein belongs to the DtdA deacylase family. As to quaternary structure, monomer. The cofactor is Zn(2+).

It catalyses the reaction a D-aminoacyl-tRNA + H2O = a tRNA + a D-alpha-amino acid + H(+). The catalysed reaction is glycyl-tRNA(Ala) + H2O = tRNA(Ala) + glycine + H(+). Its function is as follows. D-aminoacyl-tRNA deacylase with broad substrate specificity. By recycling D-aminoacyl-tRNA to D-amino acids and free tRNA molecules, this enzyme counteracts the toxicity associated with the formation of D-aminoacyl-tRNA entities in vivo. The sequence is that of D-aminoacyl-tRNA deacylase from Picrophilus torridus (strain ATCC 700027 / DSM 9790 / JCM 10055 / NBRC 100828 / KAW 2/3).